The chain runs to 131 residues: Glycine cleavage system H protein (131 aa).

The 83-residue stretch at 24–106 (TVTIGITDHA…YEDGWIIKLK (83 aa)) folds into the Lipoyl-binding domain. Lys-65 is modified (N6-lipoyllysine).

The protein belongs to the GcvH family. In terms of assembly, the glycine cleavage system is composed of four proteins: P, T, L and H. (R)-lipoate is required as a cofactor.

In terms of biological role, the glycine cleavage system catalyzes the degradation of glycine. The H protein shuttles the methylamine group of glycine from the P protein to the T protein. The chain is Glycine cleavage system H protein from Chromohalobacter salexigens (strain ATCC BAA-138 / DSM 3043 / CIP 106854 / NCIMB 13768 / 1H11).